The following is a 191-amino-acid chain: Large ribosomal subunit protein bL9 (191 aa).

The disordered stretch occupies residues 171 to 191 (EDALKPEDFFNPEAELESEEE).

The protein belongs to the bacterial ribosomal protein bL9 family.

Functionally, binds to the 23S rRNA. The polypeptide is Large ribosomal subunit protein bL9 (Rhizobium meliloti (strain 1021) (Ensifer meliloti)).